Here is a 165-residue protein sequence, read N- to C-terminus: Thiol peroxidase (165 aa).

In terms of domain architecture, Thioredoxin spans 18-164 (RKVGDKAPNF…YEAAIEAAKK (147 aa)). Cysteine 60 acts as the Cysteine sulfenic acid (-SOH) intermediate in catalysis. Cysteine 60 and cysteine 94 are disulfide-bonded.

This sequence belongs to the peroxiredoxin family. Tpx subfamily. In terms of assembly, homodimer.

It carries out the reaction a hydroperoxide + [thioredoxin]-dithiol = an alcohol + [thioredoxin]-disulfide + H2O. Functionally, thiol-specific peroxidase that catalyzes the reduction of hydrogen peroxide and organic hydroperoxides to water and alcohols, respectively. Plays a role in cell protection against oxidative stress by detoxifying peroxides. The polypeptide is Thiol peroxidase (Listeria innocua serovar 6a (strain ATCC BAA-680 / CLIP 11262)).